Here is a 518-residue protein sequence, read N- to C-terminus: Hyccin (518 aa).

2 disordered regions span residues 385 to 410 (GLRR…MDQL) and 466 to 492 (VFSG…EGVA). Basic and acidic residues predominate over residues 393–403 (SSKEKDKEKDA). Polar residues predominate over residues 466–484 (VFSGNQPSSRASSPTSNHV).

It belongs to the Hyccin family. As to quaternary structure, component of a phosphatidylinositol 4-kinase (PI4K) complex.

The protein resides in the cytoplasm. Its subcellular location is the cytosol. It localises to the cell membrane. In terms of biological role, component of a complex required to localize phosphatidylinositol 4-kinase (PI4K) to the plasma membrane. The complex acts as a regulator of phosphatidylinositol 4-phosphate (PtdIns(4)P) synthesis. In Danio rerio (Zebrafish), this protein is Hyccin (hycc1).